We begin with the raw amino-acid sequence, 285 residues long: Hydroxyethylthiazole kinase (285 aa).

Met-43 serves as a coordination point for substrate. 2 residues coordinate ATP: Lys-119 and Ser-172. Position 199 (Gly-199) interacts with substrate.

The protein belongs to the Thz kinase family. The cofactor is Mg(2+).

The enzyme catalyses 5-(2-hydroxyethyl)-4-methylthiazole + ATP = 4-methyl-5-(2-phosphooxyethyl)-thiazole + ADP + H(+). Its pathway is cofactor biosynthesis; thiamine diphosphate biosynthesis; 4-methyl-5-(2-phosphoethyl)-thiazole from 5-(2-hydroxyethyl)-4-methylthiazole: step 1/1. Catalyzes the phosphorylation of the hydroxyl group of 4-methyl-5-beta-hydroxyethylthiazole (THZ). This chain is Hydroxyethylthiazole kinase, found in Desulfovibrio desulfuricans (strain ATCC 27774 / DSM 6949 / MB).